The sequence spans 255 residues: Small ribosomal subunit protein eS1 (255 aa).

Over residues 1–18 (MAVGKNKRLSKGKKGLKK) the composition is skewed to basic residues. Residues 1–28 (MAVGKNKRLSKGKKGLKKRTQDPFSRKD) are disordered. The residue at position 2 (A2) is an N-acetylalanine; partial. Residues 19 to 28 (RTQDPFSRKD) are compositionally biased toward basic and acidic residues.

Belongs to the eukaryotic ribosomal protein eS1 family. As to quaternary structure, component of the small ribosomal subunit. Mature ribosomes consist of a small (40S) and a large (60S) subunit. The 40S subunit contains about 33 different proteins and 1 molecule of RNA (18S). The 60S subunit contains about 49 different proteins and 3 molecules of RNA (25S, 5.8S and 5S).

The protein localises to the cytoplasm. The chain is Small ribosomal subunit protein eS1 from Ajellomyces capsulatus (strain G186AR / H82 / ATCC MYA-2454 / RMSCC 2432) (Darling's disease fungus).